Reading from the N-terminus, the 70-residue chain is Small ribosomal subunit protein bS21 (70 aa).

The disordered stretch occupies residues 40-70 (KPTAERKRKHAAAVKRHYKRIRSQQLPPRLY). Residues 45 to 61 (RKRKHAAAVKRHYKRIR) show a composition bias toward basic residues.

It belongs to the bacterial ribosomal protein bS21 family.

This Bordetella parapertussis (strain 12822 / ATCC BAA-587 / NCTC 13253) protein is Small ribosomal subunit protein bS21.